Consider the following 315-residue polypeptide: WD repeat domain-containing protein 83 (315 aa).

WD repeat units lie at residues 23 to 62 (CSQGAVRAVRFNVDGNYCLTCGSDKTLKLWNPLRGTLLRT), 65 to 104 (GHGYEVLDAAGSFDNSHLCSGGGDKTVVLWDVATGQVVRK), 107 to 146 (GHAGKVNTVQFNEEATVILSGSIDSSVRCWDCRSRKPEPV), 151 to 188 (EARDGISSVKVSDHEILAGSVDGRVRRYDLRMGQVSSD), 190 to 228 (VGSPITCTCFSRDGQCTLISSLDSTLRLLDKDTGELLGE), 231 to 272 (GHKN…LALA), and 275 to 313 (VGSNVVQSLAYHPTEPCLLTAMGGSIQYWREETYEAEGG).

This sequence belongs to the WD repeat MORG1 family. Interacts with EGLN3/PHD3. Interacts with ERK signaling proteins MAP2K1/MEK1, MAP2K2/MEK2, LAMTOR3, ARAF/Raf-1, MAPK1/ERK2 and MAPK3/ERK1. Identified in the spliceosome C complex. Interacts with PARD6B and CRB3. Interacts strongly with GTP-bound RRAGA but not with inactive GDP-bound. Interacts with p62/SQSTM1. As to expression, ubiquitous.

It localises to the cytoplasm. Its subcellular location is the lysosome. It is found in the nucleus. Molecular scaffold protein for various multimeric protein complexes. Acts as a module in the assembly of a multicomponent scaffold for the ERK pathway, linking ERK responses to specific agonists. At low concentrations it enhances ERK activation, whereas high concentrations lead to the inhibition of ERK activation. Also involved in response to hypoxia by acting as a negative regulator of HIF1A/HIF-1-alpha via its interaction with EGLN3/PHD3. May promote degradation of HIF1A. May act by recruiting signaling complexes to a specific upstream activator. May also be involved in pre-mRNA splicing. Participates in tight junction development by regulating apico-basal polarity, a key step in tissue development and organization. Mechanistically, regulates the translocation of PAR6-aPKC from the cytoplasm to the apical surface by acting as an adapter between PARD6B AND CRB3. Also acts as a negative regulator of mTORC1 under nutrient-rich conditions by binding to the active Rag GTPases to inhibit mTORC1 localization to the lysosome and phosphorylation of downstream targets. This facilitates constitutive basal autophagy during nutrient availability. The chain is WD repeat domain-containing protein 83 (Wdr83) from Mus musculus (Mouse).